The following is a 384-amino-acid chain: DNA replication and repair protein RecF (384 aa).

43–50 (GENGSGKT) lines the ATP pocket.

Belongs to the RecF family.

It is found in the cytoplasm. Functionally, the RecF protein is involved in DNA metabolism; it is required for DNA replication and normal SOS inducibility. RecF binds preferentially to single-stranded, linear DNA. It also seems to bind ATP. In Brucella suis biovar 1 (strain 1330), this protein is DNA replication and repair protein RecF.